A 348-amino-acid chain; its full sequence is Heat-inducible transcription repressor HrcA (348 aa).

The protein belongs to the HrcA family.

In terms of biological role, negative regulator of class I heat shock genes (grpE-dnaK-dnaJ and groELS operons). Prevents heat-shock induction of these operons. In Ruminiclostridium cellulolyticum (strain ATCC 35319 / DSM 5812 / JCM 6584 / H10) (Clostridium cellulolyticum), this protein is Heat-inducible transcription repressor HrcA.